The chain runs to 602 residues: Sulfite reductase [NADPH] flavoprotein alpha-component (602 aa).

In terms of domain architecture, Flavodoxin-like spans 68–206 (ITIISASQTG…NYIQWSEELL (139 aa)). Residues 74–79 (SQTGNA), 121–124 (STQG), and 157–166 (LGDVSYNLFC) each bind FMN. Residues 237–451 (YKPAVATVLL…VEEKSNFRLP (215 aa)) enclose the FAD-binding FR-type domain. Residues threonine 325, lysine 359, 389 to 392 (RLYS), 407 to 409 (TVG), and 422 to 425 (GGSS) contribute to the FAD site. Residues 522–523 (SR), 528–532 (KIYVQ), and aspartate 564 each bind NADP(+). Tyrosine 602 is an FAD binding site.

It belongs to the NADPH-dependent sulphite reductase flavoprotein subunit CysJ family. This sequence in the N-terminal section; belongs to the flavodoxin family. The protein in the C-terminal section; belongs to the flavoprotein pyridine nucleotide cytochrome reductase family. Alpha(8)-beta(8). The alpha component is a flavoprotein, the beta component is a hemoprotein. It depends on FAD as a cofactor. Requires FMN as cofactor.

It carries out the reaction hydrogen sulfide + 3 NADP(+) + 3 H2O = sulfite + 3 NADPH + 4 H(+). It participates in sulfur metabolism; hydrogen sulfide biosynthesis; hydrogen sulfide from sulfite (NADPH route): step 1/1. Its function is as follows. Component of the sulfite reductase complex that catalyzes the 6-electron reduction of sulfite to sulfide. This is one of several activities required for the biosynthesis of L-cysteine from sulfate. The flavoprotein component catalyzes the electron flow from NADPH -&gt; FAD -&gt; FMN to the hemoprotein component. In Buchnera aphidicola subsp. Schizaphis graminum (strain Sg), this protein is Sulfite reductase [NADPH] flavoprotein alpha-component.